A 282-amino-acid polypeptide reads, in one-letter code: Probable endonuclease 4 (282 aa).

Zn(2+)-binding residues include His70, His110, Glu146, Asp180, His183, His217, Asp230, His232, and Glu262.

The protein belongs to the AP endonuclease 2 family. Zn(2+) serves as cofactor.

The catalysed reaction is Endonucleolytic cleavage to 5'-phosphooligonucleotide end-products.. Functionally, endonuclease IV plays a role in DNA repair. It cleaves phosphodiester bonds at apurinic or apyrimidinic (AP) sites, generating a 3'-hydroxyl group and a 5'-terminal sugar phosphate. In Wolinella succinogenes (strain ATCC 29543 / DSM 1740 / CCUG 13145 / JCM 31913 / LMG 7466 / NCTC 11488 / FDC 602W) (Vibrio succinogenes), this protein is Probable endonuclease 4.